The primary structure comprises 472 residues: FAD-linked oxidoreductase azaL (472 aa).

A signal peptide spans 1 to 18 (MFRTILLCSLGLTTLSSA). Residues Asn22, Asn44, Asn102, Asn123, Asn227, Asn246, Asn273, Asn305, Asn318, Asn390, and Asn415 are each glycosylated (N-linked (GlcNAc...) asparagine). Residues 54 to 228 (TTYDAPTYIG…TSATYKIYNA (175 aa)) form the FAD-binding PCMH-type domain.

It belongs to the oxygen-dependent FAD-linked oxidoreductase family.

Its pathway is secondary metabolite biosynthesis. FAD-linked oxidoreductase; part of the gene cluster that mediates the biosynthesis of azaphilones, a class of fungal metabolites characterized by a highly oxygenated pyrano-quinone bicyclic core and exhibiting a broad range of bioactivities. In the first step, the non-reducing polyketide synthase azaA forms the hexaketide precursor from successive condensations of five malonyl-CoA units, presumably with a simple acetyl-CoA starter unit. The reactive polyketide chain then undergoes a PT-mediated C2-C7 cyclization to afford the aromatic ring and is eventually released as an aldehyde through the R-domain. The putative ketoreductase azaE is proposed to catalyze the reduction of the terminal ketone resulting in the early culture product FK17-P2a. The monooxygenase azaH was demonstrated to be the only enzyme required to convert FK17-P2a to azanigerone E. AzaH first hydroxylates the benzaldehyde intermediate FK17-P2a at C4, which triggers the formation of the pyran-ring to afford azanigerone E. In parallel, the 2,4-dimethylhexanoyl chain is synthesized by the HR-PKS azaB and is proposed to be transferred to the C4-hydroxyl of azanigerone E by the acyltransferase azaD directly from the ACP domain of azaB. Alternatively, the 2,4-dimethyl-hexanoyl chain may be offloaded from the HR-PKS as a carboxylic acid and converted to an acyl-CoA by azaF. The resulting acyl-CoA molecule could then be taken up as a substrate by AzaD to form azanigerone B. To yield the carboxylic acid substituent in azanigerone A, the hydroxypropyl side chain of azanigerone B would need to undergo a C-C oxidative cleavage catalyzed by cytochrome P450 AzaI. AzaI is proposed to act on a vicinal diol that leads to a C-C bond scission either through an alkoxyradical intermediate or a peroxy complex. In the biosynthesis of azanigerone A, azanigerone B first undergoes hydroxylation at C10, possibly catalyzed by one of the two FAD-dependent monooxygenases encoded in the cluster, azaG or azaL, resulting in the vicinal diol azanigerone C. Oxidative cleavage of azanigerone C by azaI would yield the corresponding aldehyde derivative of azanigerone A. Finally, the dehydrogenase azaJ is proposed to convert the aldehyde functional group into the carboxylic acid, completing the conversion from azanigerone B to azanigerone A. Alternatively, the oxidation of aldehyde to carboxylic acid may be catalyzed by the same P450 enzyme azaI via consecutive oxidation or by endogenous alcohol dehydrogenase. The chain is FAD-linked oxidoreductase azaL from Aspergillus niger (strain ATCC 1015 / CBS 113.46 / FGSC A1144 / LSHB Ac4 / NCTC 3858a / NRRL 328 / USDA 3528.7).